Consider the following 1131-residue polypeptide: Kinesin-like protein CG14535 (1131 aa).

A compositionally biased stretch (polar residues) spans Met-1–Arg-11. The disordered stretch occupies residues Met-1–Pro-25. The region spanning Lys-44 to Leu-396 is the Kinesin motor domain. Disordered stretches follow at residues Ala-472 to Lys-494, Asp-693 to Ile-753, Pro-905 to Leu-926, and Thr-1016 to Arg-1072. A compositionally biased stretch (low complexity) spans Ser-483–Lys-494. Residues Thr-1016–Arg-1032 show a composition bias toward polar residues.

The protein belongs to the TRAFAC class myosin-kinesin ATPase superfamily. Kinesin family. KIF26 subfamily.

It localises to the cytoplasm. The protein localises to the cytoskeleton. This chain is Kinesin-like protein CG14535, found in Drosophila melanogaster (Fruit fly).